The primary structure comprises 476 residues: RuvB-like helicase 2 (476 aa).

An ATP-binding site is contributed by 76–83 (GPPSTGKT).

This sequence belongs to the RuvB family. As to quaternary structure, may form heterododecamers with RVB1. Component of the SWR1 chromatin remodeling complex, the INO80 chromatin remodeling complex, and of the R2TP complex.

It is found in the nucleus. It catalyses the reaction ATP + H2O = ADP + phosphate + H(+). Functionally, DNA helicase which participates in several chromatin remodeling complexes, including the SWR1 and the INO80 complexes. The SWR1 complex mediates the ATP-dependent exchange of histone H2A for the H2A variant HZT1 leading to transcriptional regulation of selected genes by chromatin remodeling. The INO80 complex remodels chromatin by shifting nucleosomes and is involved in DNA repair. Also involved in pre-rRNA processing. This Candida glabrata (strain ATCC 2001 / BCRC 20586 / JCM 3761 / NBRC 0622 / NRRL Y-65 / CBS 138) (Yeast) protein is RuvB-like helicase 2 (RVB2).